Consider the following 85-residue polypeptide: Turripeptide PaIAa (85 aa).

It belongs to the turripeptide family. Expressed by the venom duct.

It localises to the secreted. Is lethal to drosophila larvae. This chain is Turripeptide PaIAa, found in Polystira albida (White giant-turris).